The chain runs to 748 residues: 5-methyltetrahydropteroyltriglutamate--homocysteine methyltransferase (748 aa).

Position 111 (lysine 111) interacts with 5-methyltetrahydropteroyltri-L-glutamate. Residues 428–430 (IGS) and glutamate 478 each bind L-homocysteine. Residues 428 to 430 (IGS) and glutamate 478 each bind L-methionine. Residues 509–510 (RC) and tryptophan 555 contribute to the 5-methyltetrahydropteroyltri-L-glutamate site. L-homocysteine is bound at residue aspartate 593. Residue aspartate 593 coordinates L-methionine. Residue glutamate 599 participates in 5-methyltetrahydropteroyltri-L-glutamate binding. Zn(2+) is bound by residues histidine 635, cysteine 637, and glutamate 659. The active-site Proton donor is the histidine 687. Cysteine 719 serves as a coordination point for Zn(2+).

Belongs to the vitamin-B12 independent methionine synthase family. The cofactor is Zn(2+).

The enzyme catalyses 5-methyltetrahydropteroyltri-L-glutamate + L-homocysteine = tetrahydropteroyltri-L-glutamate + L-methionine. The protein operates within amino-acid biosynthesis; L-methionine biosynthesis via de novo pathway; L-methionine from L-homocysteine (MetE route): step 1/1. Catalyzes the transfer of a methyl group from 5-methyltetrahydrofolate to homocysteine resulting in methionine formation. This chain is 5-methyltetrahydropteroyltriglutamate--homocysteine methyltransferase, found in Herpetosiphon aurantiacus (strain ATCC 23779 / DSM 785 / 114-95).